The chain runs to 57 residues: Potassium channel toxin alpha-KTx 8.2 (57 aa).

The N-terminal stretch at Met1 to Ala28 is a signal peptide. Disulfide bonds link Cys31–Cys47, Cys34–Cys52, and Cys38–Cys54.

It belongs to the short scorpion toxin superfamily. Potassium channel inhibitor family. Alpha-KTx 08 subfamily. Expressed by the venom gland.

Its subcellular location is the secreted. Its function is as follows. This toxin inhibits rKv1.1/KCNA1 (100% inhibition at 3 uM), Kv1.3/KCNA3 (human, mouse and rat) (IC(50)=269-467 nM), shaker IR (60% at 3 uM) and activates the mouse capsaicin receptor TRPV1 (EC(50)=132 uM, at 20 degrees Celsius), a non-selective cation channel expressed by sensory neurons of the pain pathway. In vivo, intraplantar injection of this toxin in WT mice hind paw shows significant acute pain, whereas no pain is observed when the toxin is injected into TRPV1 KO mice. In addition, subcutaneous injection into mice (185 mg) produces an excitation of the animal, but no lethality, whereas injection into cockroaches does not provoke lethality as well. The chain is Potassium channel toxin alpha-KTx 8.2 from Olivierus martensii (Manchurian scorpion).